Consider the following 156-residue polypeptide: 6,7-dimethyl-8-ribityllumazine synthase (156 aa).

5-amino-6-(D-ribitylamino)uracil is bound by residues phenylalanine 22, 57–59 (AYE), and 81–83 (TVI). Position 86–87 (86–87 (GT)) interacts with (2S)-2-hydroxy-3-oxobutyl phosphate. Histidine 89 acts as the Proton donor in catalysis. Phenylalanine 114 lines the 5-amino-6-(D-ribitylamino)uracil pocket. Arginine 128 is a binding site for (2S)-2-hydroxy-3-oxobutyl phosphate.

Belongs to the DMRL synthase family. Forms an icosahedral capsid composed of 60 subunits, arranged as a dodecamer of pentamers.

The enzyme catalyses (2S)-2-hydroxy-3-oxobutyl phosphate + 5-amino-6-(D-ribitylamino)uracil = 6,7-dimethyl-8-(1-D-ribityl)lumazine + phosphate + 2 H2O + H(+). It participates in cofactor biosynthesis; riboflavin biosynthesis; riboflavin from 2-hydroxy-3-oxobutyl phosphate and 5-amino-6-(D-ribitylamino)uracil: step 1/2. Its function is as follows. Catalyzes the formation of 6,7-dimethyl-8-ribityllumazine by condensation of 5-amino-6-(D-ribitylamino)uracil with 3,4-dihydroxy-2-butanone 4-phosphate. This is the penultimate step in the biosynthesis of riboflavin. The polypeptide is 6,7-dimethyl-8-ribityllumazine synthase (Escherichia coli O45:K1 (strain S88 / ExPEC)).